Consider the following 131-residue polypeptide: Con-Ins Q1 (131 aa).

The first 24 residues, 1–24, serve as a signal peptide directing secretion; that stretch reads MTTSSYFLLVALGLLLYLCQSSFG. Intrachain disulfides connect cysteine 29/cysteine 107, cysteine 41/cysteine 110, cysteine 53/cysteine 123, and cysteine 109/cysteine 114. A propeptide spans 59–92 (c peptide); it reads LQGGTDDARKKRGRASLLRKRRGFLSMLKARAKR. At glutamate 118 the chain carries 4-carboxyglutamate; partial. Serine amide is present on serine 130.

It belongs to the insulin family. In terms of assembly, heterodimer of A and B chains; disulfide-linked. As to expression, expressed by the venom gland.

The protein localises to the secreted. This venom insulin facilitates prey capture by rapidly inducing hypoglycemic shock. Intraperitoneal injection of this peptide into zebrafish lowers blood glucose with the same potency than human insulin. In vivo, when applied to water, this peptide reduces overall locomotor activity of zebrafish larvae, observed as a significant decrease in the percentage of time spent swimming and movement frequency. The polypeptide is Con-Ins Q1 (Conus quercinus (Oak cone)).